Reading from the N-terminus, the 260-residue chain is Ribonuclease HII (260 aa).

The 189-residue stretch at 71-259 (ELVAGVDEVG…VHDAIVNKKN (189 aa)) folds into the RNase H type-2 domain. Residues Asp77, Glu78, and Asp169 each coordinate a divalent metal cation.

The protein belongs to the RNase HII family. Requires Mn(2+) as cofactor. Mg(2+) serves as cofactor.

The protein resides in the cytoplasm. The catalysed reaction is Endonucleolytic cleavage to 5'-phosphomonoester.. Endonuclease that specifically degrades the RNA of RNA-DNA hybrids. This Leuconostoc citreum (strain KM20) protein is Ribonuclease HII.